The following is a 392-amino-acid chain: Cell division protein DivIB (392 aa).

The interval 1-87 is disordered; the sequence is MSEKDNNLTP…ETQSSEAPIE (87 aa). Residues 1–131 are Cytoplasmic-facing; that stretch reads MSEKDNNLTP…KGSAPLLKKM (131 aa). The span at 14-32 shows a compositional bias: basic and acidic residues; sequence KHLEYQKRKAEEAKKEKKA. The span at 58–76 shows a compositional bias: acidic residues; the sequence is TRDEAESAELLEEGFETNN. A helical transmembrane segment spans residues 132 to 152; that stretch reads WPALAIVVLVFVGSLYLISPL. The 72-residue stretch at 153–224 folds into the POTRA domain; sequence SKISTFSVSG…NRFEAIVKEH (72 aa). Topologically, residues 153-392 are extracellular; it reads SKISTFSVSG…TAQSTTTSSN (240 aa). The tract at residues 368 to 392 is disordered; the sequence is ISAQNAKKTDASSENTAQSTTTSSN.

It belongs to the FtsQ/DivIB family. DivIB subfamily.

Its subcellular location is the cell membrane. Cell division protein that may be involved in stabilizing or promoting the assembly of the division complex. The chain is Cell division protein DivIB from Lactococcus lactis subsp. lactis (strain IL1403) (Streptococcus lactis).